Consider the following 139-residue polypeptide: Large ribosomal subunit protein uL16 (139 aa).

It belongs to the universal ribosomal protein uL16 family. As to quaternary structure, part of the 50S ribosomal subunit.

In terms of biological role, binds 23S rRNA and is also seen to make contacts with the A and possibly P site tRNAs. The sequence is that of Large ribosomal subunit protein uL16 from Microcystis aeruginosa (strain NIES-843 / IAM M-2473).